A 578-amino-acid chain; its full sequence is 2-succinyl-5-enolpyruvyl-6-hydroxy-3-cyclohexene-1-carboxylate synthase (578 aa).

It belongs to the TPP enzyme family. MenD subfamily. As to quaternary structure, homodimer. Requires Mg(2+) as cofactor. The cofactor is Mn(2+). It depends on thiamine diphosphate as a cofactor.

It catalyses the reaction isochorismate + 2-oxoglutarate + H(+) = 5-enolpyruvoyl-6-hydroxy-2-succinyl-cyclohex-3-ene-1-carboxylate + CO2. It participates in quinol/quinone metabolism; 1,4-dihydroxy-2-naphthoate biosynthesis; 1,4-dihydroxy-2-naphthoate from chorismate: step 2/7. Its pathway is quinol/quinone metabolism; menaquinone biosynthesis. In terms of biological role, catalyzes the thiamine diphosphate-dependent decarboxylation of 2-oxoglutarate and the subsequent addition of the resulting succinic semialdehyde-thiamine pyrophosphate anion to isochorismate to yield 2-succinyl-5-enolpyruvyl-6-hydroxy-3-cyclohexene-1-carboxylate (SEPHCHC). In Bacillus velezensis (strain DSM 23117 / BGSC 10A6 / LMG 26770 / FZB42) (Bacillus amyloliquefaciens subsp. plantarum), this protein is 2-succinyl-5-enolpyruvyl-6-hydroxy-3-cyclohexene-1-carboxylate synthase.